A 366-amino-acid chain; its full sequence is Chalcone synthase B (366 aa).

Residue Cys-172 is part of the active site.

This sequence belongs to the thiolase-like superfamily. Chalcone/stilbene synthases family.

It catalyses the reaction (E)-4-coumaroyl-CoA + 3 malonyl-CoA + 3 H(+) = 2',4,4',6'-tetrahydroxychalcone + 3 CO2 + 4 CoA. It participates in secondary metabolite biosynthesis; flavonoid biosynthesis. The primary product of this enzyme is 4,2',4',6'-tetrahydroxychalcone (also termed naringenin-chalcone or chalcone) which can under specific conditions spontaneously isomerize into naringenin. The chain is Chalcone synthase B (CHSB) from Ipomoea triloba (Trilobed morning glory).